A 498-amino-acid chain; its full sequence is Guanosine-5'-triphosphate,3'-diphosphate pyrophosphatase (498 aa).

This sequence belongs to the GppA/Ppx family. GppA subfamily.

It carries out the reaction guanosine 3'-diphosphate 5'-triphosphate + H2O = guanosine 3',5'-bis(diphosphate) + phosphate + H(+). The protein operates within purine metabolism; ppGpp biosynthesis; ppGpp from GTP: step 2/2. In terms of biological role, catalyzes the conversion of pppGpp to ppGpp. Guanosine pentaphosphate (pppGpp) is a cytoplasmic signaling molecule which together with ppGpp controls the 'stringent response', an adaptive process that allows bacteria to respond to amino acid starvation, resulting in the coordinated regulation of numerous cellular activities. The polypeptide is Guanosine-5'-triphosphate,3'-diphosphate pyrophosphatase (Serratia proteamaculans (strain 568)).